We begin with the raw amino-acid sequence, 207 residues long: Transcriptional regulatory protein RcsA (207 aa).

Residues isoleucine 131–aspartate 196 form the HTH luxR-type domain. Positions threonine 155 to glycine 174 form a DNA-binding region, H-T-H motif.

It belongs to the RcsA family. In terms of assembly, interacts with RcsB.

In terms of biological role, component of the Rcs signaling system, which controls transcription of numerous genes. Binds, with RcsB, to the RcsAB box to regulate expression of genes. The protein is Transcriptional regulatory protein RcsA of Salmonella typhi.